A 241-amino-acid polypeptide reads, in one-letter code: Orotidine 5'-phosphate decarboxylase (241 aa).

Substrate-binding positions include Asp18, Lys39, 66–75 (DLKFHDIPAT), Thr130, Arg192, Gln201, Gly221, and Arg222. Lys68 functions as the Proton donor in the catalytic mechanism.

The protein belongs to the OMP decarboxylase family. Type 1 subfamily. As to quaternary structure, homodimer.

The enzyme catalyses orotidine 5'-phosphate + H(+) = UMP + CO2. It functions in the pathway pyrimidine metabolism; UMP biosynthesis via de novo pathway; UMP from orotate: step 2/2. Functionally, catalyzes the decarboxylation of orotidine 5'-monophosphate (OMP) to uridine 5'-monophosphate (UMP). This chain is Orotidine 5'-phosphate decarboxylase, found in Synechococcus sp. (strain CC9605).